The sequence spans 232 residues: Demethylmenaquinone methyltransferase (232 aa).

S-adenosyl-L-methionine is bound by residues threonine 58, aspartate 79, and asparagine 104–alanine 105.

The protein belongs to the class I-like SAM-binding methyltransferase superfamily. MenG/UbiE family.

It carries out the reaction a 2-demethylmenaquinol + S-adenosyl-L-methionine = a menaquinol + S-adenosyl-L-homocysteine + H(+). It participates in quinol/quinone metabolism; menaquinone biosynthesis; menaquinol from 1,4-dihydroxy-2-naphthoate: step 2/2. Functionally, methyltransferase required for the conversion of demethylmenaquinol (DMKH2) to menaquinol (MKH2). The sequence is that of Demethylmenaquinone methyltransferase from Bacillus licheniformis (strain ATCC 14580 / DSM 13 / JCM 2505 / CCUG 7422 / NBRC 12200 / NCIMB 9375 / NCTC 10341 / NRRL NRS-1264 / Gibson 46).